The sequence spans 258 residues: Thiamine thiazole synthase (258 aa).

Residues alanine 36, 55–56 (EK), glycine 63, valine 127, and 154–156 (HVD) contribute to the NAD(+) site. The Fe cation site is built by aspartate 156 and histidine 171. Residue methionine 224 coordinates NAD(+). Position 234 (arginine 234) interacts with glycine.

Belongs to the THI4 family. As to quaternary structure, homooctamer; tetramer of dimers. Requires Fe(2+) as cofactor.

It carries out the reaction hydrogen sulfide + glycine + NAD(+) = ADP-5-ethyl-4-methylthiazole-2-carboxylate + nicotinamide + 3 H2O + H(+). Its pathway is cofactor biosynthesis; thiamine diphosphate biosynthesis. Involved in the biosynthesis of the thiazole moiety of thiamine. Catalyzes the conversion of NAD and glycine to adenosine diphosphate 5-(2-hydroxyethyl)-4-methylthiazole-2-carboxylate (ADT), an adenylated thiazole intermediate, using free sulfide as a source of sulfur. The protein is Thiamine thiazole synthase of Methanococcoides burtonii (strain DSM 6242 / NBRC 107633 / OCM 468 / ACE-M).